Consider the following 129-residue polypeptide: Cortical cell-delineating protein (129 aa).

The segment at residues 1-19 (MAPKVALFLALSLLFAATA) is a signal peptide (or 21). N-linked (GlcNAc...) asparagine glycosylation occurs at Asn25. 2 consecutive repeat copies span residues 29–34 (PVVPTP) and 35–40 (PVVPTP). Residues 29 to 40 (PVVPTPPVVPTP) form a 2 X 6 AA tandem repeats of P-V-V-P-T-P region.

It to carrot DC2.15 and PEMB3. In terms of tissue distribution, cortical ground meristem of developing roots.

Functionally, delineates a novel subset of developing cortical cells. It is probably involved in some aspect of transport of molecules to or from the vasculature. The sequence is that of Cortical cell-delineating protein from Zea mays (Maize).